A 173-amino-acid chain; its full sequence is Nicotinamide-nucleotide adenylyltransferase (173 aa).

Belongs to the archaeal NMN adenylyltransferase family.

The protein resides in the cytoplasm. The enzyme catalyses beta-nicotinamide D-ribonucleotide + ATP + H(+) = diphosphate + NAD(+). It participates in cofactor biosynthesis; NAD(+) biosynthesis; NAD(+) from nicotinamide D-ribonucleotide: step 1/1. The polypeptide is Nicotinamide-nucleotide adenylyltransferase (Methanosarcina barkeri (strain Fusaro / DSM 804)).